Consider the following 263-residue polypeptide: 3-methyl-2-oxobutanoate hydroxymethyltransferase (263 aa).

Residues aspartate 46 and aspartate 85 each contribute to the Mg(2+) site. 3-methyl-2-oxobutanoate-binding positions include 46–47, aspartate 85, and lysine 115; that span reads DS. Glutamate 117 contributes to the Mg(2+) binding site. Residue glutamate 180 is the Proton acceptor of the active site.

It belongs to the PanB family. As to quaternary structure, homodecamer; pentamer of dimers. Mg(2+) is required as a cofactor.

Its subcellular location is the cytoplasm. The enzyme catalyses 3-methyl-2-oxobutanoate + (6R)-5,10-methylene-5,6,7,8-tetrahydrofolate + H2O = 2-dehydropantoate + (6S)-5,6,7,8-tetrahydrofolate. Its pathway is cofactor biosynthesis; (R)-pantothenate biosynthesis; (R)-pantoate from 3-methyl-2-oxobutanoate: step 1/2. Its function is as follows. Catalyzes the reversible reaction in which hydroxymethyl group from 5,10-methylenetetrahydrofolate is transferred onto alpha-ketoisovalerate to form ketopantoate. This is 3-methyl-2-oxobutanoate hydroxymethyltransferase from Corynebacterium diphtheriae (strain ATCC 700971 / NCTC 13129 / Biotype gravis).